Reading from the N-terminus, the 302-residue chain is Recombination-associated protein RdgC (302 aa).

Belongs to the RdgC family.

The protein localises to the cytoplasm. It localises to the nucleoid. May be involved in recombination. The polypeptide is Recombination-associated protein RdgC (Tolumonas auensis (strain DSM 9187 / NBRC 110442 / TA 4)).